A 369-amino-acid polypeptide reads, in one-letter code: Protein RecA (369 aa).

The span at 1–10 (MARTTDDSKK) shows a compositional bias: basic and acidic residues. The disordered stretch occupies residues 1-20 (MARTTDDSKKAAPAAGTADE). 82 to 89 (GPESSGKT) serves as a coordination point for ATP. The tract at residues 350-369 (PAAAVAAPDEGDDDLGDEEV) is disordered. Residues 358-369 (DEGDDDLGDEEV) are compositionally biased toward acidic residues.

The protein belongs to the RecA family.

The protein resides in the cytoplasm. Functionally, can catalyze the hydrolysis of ATP in the presence of single-stranded DNA, the ATP-dependent uptake of single-stranded DNA by duplex DNA, and the ATP-dependent hybridization of homologous single-stranded DNAs. It interacts with LexA causing its activation and leading to its autocatalytic cleavage. The sequence is that of Protein RecA from Gloeobacter violaceus (strain ATCC 29082 / PCC 7421).